The chain runs to 485 residues: Warthog protein 1 (485 aa).

The signal sequence occupies residues 1–21 (MMVMNPLTATFLAALIGTAAS). The tract at residues 236–258 (DQRLSPSTDVQSDSYVSPTEADP) is disordered. Residues 239-252 (LSPSTDVQSDSYVS) are compositionally biased toward polar residues.

It belongs to the hedgehog family. In terms of processing, the C-terminal domain displays an autoproteolysis activity.

Its subcellular location is the secreted. It localises to the cell surface. The protein localises to the cell membrane. It is found in the extracellular space. Functionally, intercellular signal essential for a variety of patterning events during development. The chain is Warthog protein 1 (wrt-1) from Caenorhabditis elegans.